Reading from the N-terminus, the 429-residue chain is Endoglucanase A (429 aa).

Residues 1–34 form the signal peptide; that stretch reads MVSKKQKFLTVILVIVLAIVIVGGVFGISFVKGR. The segment covering 46–94 has biased composition (basic and acidic residues); sequence AKTEQVKEPAKEEPKLVIKEKKQDESAKKEQELKKAKEEAEAAVEKETE. The disordered stretch occupies residues 46–100; it reads AKTEQVKEPAKEEPKLVIKEKKQDESAKKEQELKKAKEEAEAAVEKETEKTEEEP. Residue E249 is the Proton donor of the active site. Residue E334 is the Nucleophile of the active site.

This sequence belongs to the glycosyl hydrolase 5 (cellulase A) family.

The catalysed reaction is Endohydrolysis of (1-&gt;4)-beta-D-glucosidic linkages in cellulose, lichenin and cereal beta-D-glucans.. In Butyrivibrio fibrisolvens, this protein is Endoglucanase A (celA).